Reading from the N-terminus, the 391-residue chain is Methionine import ATP-binding protein MetN 2 (391 aa).

In terms of domain architecture, ABC transporter spans 44–280 (VHVGKVFATP…PRHGATRALL (237 aa)). Residue 77 to 84 (GRSGAGKS) participates in ATP binding.

This sequence belongs to the ABC transporter superfamily. Methionine importer (TC 3.A.1.24) family. As to quaternary structure, the complex is composed of two ATP-binding proteins (MetN), two transmembrane proteins (MetI) and a solute-binding protein (MetQ).

It is found in the cell inner membrane. It catalyses the reaction L-methionine(out) + ATP + H2O = L-methionine(in) + ADP + phosphate + H(+). The enzyme catalyses D-methionine(out) + ATP + H2O = D-methionine(in) + ADP + phosphate + H(+). Part of the ABC transporter complex MetNIQ involved in methionine import. Responsible for energy coupling to the transport system. The sequence is that of Methionine import ATP-binding protein MetN 2 from Burkholderia ambifaria (strain ATCC BAA-244 / DSM 16087 / CCUG 44356 / LMG 19182 / AMMD) (Burkholderia cepacia (strain AMMD)).